The following is a 141-amino-acid chain: Hemoglobin subunit alpha (141 aa).

Positions 1-141 (VLSDKDKTNV…VSTVLTSKYR (141 aa)) constitute a Globin domain. The residue at position 3 (Ser-3) is a Phosphoserine. Lys-7 is modified (N6-succinyllysine). Phosphothreonine is present on Thr-8. Lys-11 carries the N6-succinyllysine modification. Position 16 is an N6-acetyllysine; alternate (Lys-16). Lys-16 carries the N6-succinyllysine; alternate modification. Tyr-24 is modified (phosphotyrosine). Ser-35 carries the post-translational modification Phosphoserine. Lys-40 is subject to N6-succinyllysine. A Phosphoserine modification is found at Ser-49. Residue His-58 participates in O2 binding. His-87 provides a ligand contact to heme b. At Ser-102 the chain carries Phosphoserine. Thr-108 carries the post-translational modification Phosphothreonine. The residue at position 124 (Ser-124) is a Phosphoserine. Residues Thr-134 and Thr-137 each carry the phosphothreonine modification. Position 138 is a phosphoserine (Ser-138).

It belongs to the globin family. Heterotetramer of two alpha chains and two beta chains. As to expression, red blood cells.

Involved in oxygen transport from the lung to the various peripheral tissues. In terms of biological role, hemopressin acts as an antagonist peptide of the cannabinoid receptor CNR1. Hemopressin-binding efficiently blocks cannabinoid receptor CNR1 and subsequent signaling. The protein is Hemoglobin subunit alpha (HBA) of Elephas maximus (Indian elephant).